Reading from the N-terminus, the 857-residue chain is Gelation factor (857 aa).

At Met1 the chain carries Blocked amino end (Met). Residues 1–250 (MAAAPSGKTW…EKKRRETSDA (250 aa)) are actin-binding. Calponin-homology (CH) domains lie at 12-117 (DVQK…LRYQ) and 125-227 (NSPK…DYAL). The interval 229-246 (KEKRDADALAALEKKRRE) is regulatory site. 6 Filamin repeats span residues 245 to 346 (RETS…NVKI), 347 to 446 (DGSD…EVKI), 447 to 545 (LNSD…SIHI), 546 to 645 (KPAA…TVTV), 646 to 747 (KPAP…DVKC), and 763 to 837 (FTVA…KQVL). Positions 832 to 857 (PFKQVLGNPGKKNPEVKSFTTTRTAN) are disordered.

In terms of assembly, homodimer.

In terms of biological role, F-actin cross-linking protein. This is Gelation factor (abpC) from Dictyostelium discoideum (Social amoeba).